Consider the following 63-residue polypeptide: Protein CYSTEINE-RICH TRANSMEMBRANE MODULE 12 (63 aa).

Positions 1–34 are disordered; that stretch reads MQDMRDQNPPQGYPAAEQVSEQPGQDKKKKKPRF. Residues 40-56 traverse the membrane as a helical segment; it reads KGDRGFIEGCLFALCCC.

The protein belongs to the CYSTM1 family. In terms of assembly, homodimer and heterodimers. Binds weakly to CYSTM4, CYSTM6 and CYSTM7. Mostly expressed in roots, flowers and siliques and, to a lower extent, in stems and leaves.

Its subcellular location is the cell membrane. It localises to the cytoplasm. Involved in resistance to abiotic stress. The polypeptide is Protein CYSTEINE-RICH TRANSMEMBRANE MODULE 12 (Arabidopsis thaliana (Mouse-ear cress)).